The sequence spans 772 residues: Acyl-homoserine lactone acylase PvdQ (772 aa).

An N-terminal signal peptide occupies residues 1 to 28; sequence MPVFPFCRPMTCAGLAAALVAFSVGVQA. The propeptide at 199-220 is spacer peptide; sequence AQSSAGFASALARQERFAAERG. The active-site Nucleophile is the S221.

The protein belongs to the peptidase S45 family. In terms of assembly, heterodimer of an alpha subunit and a beta subunit processed from the same precursor.

The protein resides in the periplasm. The catalysed reaction is an N-acyl-L-homoserine lactone + H2O = L-homoserine lactone + a carboxylate. Its function is as follows. Catalyzes the deacylation of acyl-homoserine lactone (AHL or acyl-HSL), releasing homoserine lactone (HSL) and the corresponding fatty acid. Possesses a specificity for the degradation of long-chain acyl-HSLs (side chains of 11 to 14 carbons in length). The sequence is that of Acyl-homoserine lactone acylase PvdQ (pvdQ) from Pseudomonas putida (strain ATCC 47054 / DSM 6125 / CFBP 8728 / NCIMB 11950 / KT2440).